A 131-amino-acid chain; its full sequence is Phosphomevalonate dehydratase small subunit (131 aa).

Ser62 acts as the Proton acceptor in catalysis.

The protein belongs to the AcnX type II small subunit family. As to quaternary structure, heterodimer composed of a large subunit (PMDh-L) and a small subunit (PMDh-S).

It catalyses the reaction (R)-5-phosphomevalonate = (2E)-3-methyl-5-phosphooxypent-2-enoate + H2O. It participates in isoprenoid biosynthesis; isopentenyl diphosphate biosynthesis via mevalonate pathway. In terms of biological role, component of a hydro-lyase that catalyzes the dehydration of mevalonate 5-phosphate (MVA5P) to form trans-anhydromevalonate 5-phosphate (tAHMP). Involved in the archaeal mevalonate (MVA) pathway, which provides fundamental precursors for isoprenoid biosynthesis, such as isopentenyl diphosphate (IPP) and dimethylallyl diphosphate (DMAPP). The chain is Phosphomevalonate dehydratase small subunit from Thermococcus gammatolerans (strain DSM 15229 / JCM 11827 / EJ3).